Reading from the N-terminus, the 297-residue chain is N-acetylneuraminate lyase (297 aa).

Aceneuramate contacts are provided by S47 and T48. The Proton donor role is filled by Y137. The Schiff-base intermediate with substrate role is filled by K165. Aceneuramate is bound by residues T167, G189, D191, E192, and S208.

This sequence belongs to the DapA family. NanA subfamily. Homotetramer.

It is found in the cytoplasm. It carries out the reaction aceneuramate = aldehydo-N-acetyl-D-mannosamine + pyruvate. The protein operates within amino-sugar metabolism; N-acetylneuraminate degradation; D-fructose 6-phosphate from N-acetylneuraminate: step 1/5. Catalyzes the reversible aldol cleavage of N-acetylneuraminic acid (sialic acid; Neu5Ac) to form pyruvate and N-acetylmannosamine (ManNAc) via a Schiff base intermediate. The chain is N-acetylneuraminate lyase from Citrobacter koseri (strain ATCC BAA-895 / CDC 4225-83 / SGSC4696).